We begin with the raw amino-acid sequence, 525 residues long: DNA polymerase epsilon subunit 2 (525 aa).

This sequence belongs to the DNA polymerase epsilon subunit B family. As to quaternary structure, component of the epsilon DNA polymerase complex consisting of four subunits: the catalytic subunit PolE1/DNApol-epsilon255 and the accessory subunits PolE2/DNApol-epsilon58, Chrac-14/DNApolE3 and PolE4.

It localises to the nucleus. Its function is as follows. Accessory component of the DNA polymerase epsilon complex. Participates in DNA repair and in chromosomal DNA replication. Has a role in the entrance and progression through S phase. Has a role in endoreplication. Essential for viability and tissue development. The chain is DNA polymerase epsilon subunit 2 from Drosophila melanogaster (Fruit fly).